Consider the following 278-residue polypeptide: Achaete-scute homolog 5 (278 aa).

The interval 1–66 is disordered; sequence MPMGAAERGA…GPFGGGLALG (66 aa). The region spanning 155-207 is the bHLH domain; it reads AFIQKRNERERQRVKCVNEGYARLRGHLPGALAEKRLSKVETLRAAIRYIKYL. A disordered region spans residues 214 to 278; the sequence is APDGSTPPAS…PFLESEESWH (65 aa). Over residues 230–239 the composition is skewed to pro residues; it reads GPCPAPPATP. Positions 240–249 are enriched in basic and acidic residues; that stretch reads RPDRPGDGEA. A compositionally biased stretch (low complexity) spans 252-271; the sequence is PSSLVPESSESSCFSPSPFL.

Interacts with transcription factor TCF3/E12.

It is found in the nucleus. In terms of biological role, transcription factor. Probably binds E-box motifs 5'-CANNTG-3' in complex with transcription factor TCF3/E12. Negatively modulates transcription of target genes such as CDH1/E-cadherin, perhaps by recruiting the PRC2 repressive complex to regulatory elements. Regulates ameloblast development and tooth germ growth, perhaps acting by positively modulating migration of inner enamel epithelium (IEE) cells. Plays a role in enamel formation. This Homo sapiens (Human) protein is Achaete-scute homolog 5 (ASCL5).